Here is a 142-residue protein sequence, read N- to C-terminus: MSYLLPHLHSGWAVDQSILAEEERLVVIRFGHDWDETCMQMDEVLASVAETIKNFAVIYLVDITEVPDFNTMYELYDPSTVMFFFRNKHIMIDLGTGNNNKINWALKDKQEFIDIIETVYRGARKGRGLVIAPKDYSTKYRY.

The protein belongs to the DIM1 family. As to expression, expressed in roots, leaves, stems, cauline leaves and flowers.

This is Thioredoxin-like protein YLS8 (YLS8) from Arabidopsis thaliana (Mouse-ear cress).